The following is a 1346-amino-acid chain: MSVLCVLLLAFVLPLRGSSSAGSTECKTYDERSRSAGKSSPSGATLDRKVVCSNMEFRQVPSPDTFPNRTVSLILSNNKIQELLNGSFVGLSSLERLDIKNNIITHIEPGAFYGLFSLKRLDLSKNLIGCLHVDVFKGLTNLVKLNLSENKFSSLSQGIFDSLGSLKILEFDSPYLLCDCNLQWLVVWIKEKAIGVKETRCSFPRSLQGQLITTLRAETLTCDAPLELPSFQMTPSQHQIVFQGDSLPFQCMASFVDEDMQVLWYQDGKMVEPDATQGIYIEKSMVQNCSLIASALTISNIQPGFTGNWECRVRTSRGNNTRTVHIVVLESSAKYCLPDRVSNNKGEYRWPRTLAGITAYLPCKRQVTGAGIYSGSSAEDRRAWRRCDRGGQWAEDDYSRCEYMKDVTRVLYIINQMPLNLTNVVQTAQQLLAYTAEAPNFSDKVDVIFVAEMIEKIGKFAEKYKELGDVMVDISSNLLLADERVLWMAQREARACSRMVESLQRIALLRVSNGALAYSTNSPNIALEAHAIKASSFNGMTCTLFQKLSPERTVMAHHGEISPERQLSFKCNVTSNLSALALKNTIVEASLQLPPTLFSSLGSSGQAEEAVYKLHLLAFRNGKLFPPTGNSSILSDGSKRRSVVTPVMITKIEGFPLRDLLSPVNVTLRRFLQGSDAVPAFWNFSLQGGQGGWQSDGCRILHQDDNFTTVSCHSLNSYAVLMDLNRTGYNVFIFRPLHPVIYSTALVLVLCLLSVIVSYIYHHKSVRISKKCWHMLVNLCLHILLTCAVFVGGINQTYNASVCQAMGIVLHYSTLATALWSGVTARNIYKQVTRKAKRYEELDEPPPPPRPMLRFYLIGGGIPIIVCGITAAANIKNYGSQVNAPYCWMAWEPSLGAFYGPAAFIVFVDCMYFLSILIQLRRHPERRFELKEQSEEQQHLSVTEATEITPVHLESSPTAQPVPMSALENEHTFVSQLMGVAGSLTLYAALWVFGALAISQEHPADLVFACLFGALALGLGAFLVAHHCVNRQDMRRHWSQACCLIRRNYAVQVDSLLLPIAGSSGSVMTSRGNGEATKCPASSAESSCTNKSAPSLRNSTQGCKLTNLQVEAAQCKVVAPSTANGTAVLDNSLTEHSVDNEIKMHVAPIEIQYRPSSVNNNNLPGNANITGHPGRHHKNRSRAHRASRLTVLREYSYDVPTSVEGSVQSVPNKRHHHESLHARNSRRAAYLAYRERQQSQLQQDSSDAASTSVPRRSRHFSKGTRIGNGFGHGISNGGLLDGSEADVTNQTKECPKQTLTVELEVQPKSYGLNLACQNGSAKDSERLNVESSGNVKTGLWKHETTV.

Positions 1–21 (MSVLCVLLLAFVLPLRGSSSA) are cleaved as a signal peptide. The tract at residues 18–45 (SSSAGSTECKTYDERSRSAGKSSPSGAT) is disordered. The Extracellular portion of the chain corresponds to 22–739 (GSTECKTYDE…NVFIFRPLHP (718 aa)). LRR repeat units follow at residues 66–90 (FPNR…SFVG), 91–114 (LSSL…AFYG), 116–138 (FSLK…VFKG), and 139–162 (LTNL…IFDS). One can recognise an LRRCT domain in the interval 176 to 223 (LLCDCNLQWLVVWIKEKAIGVKETRCSFPRSLQGQLITTLRAETLTCD). The region spanning 229–327 (PSFQMTPSQH…GNNTRTVHIV (99 aa)) is the Ig-like domain. An intrachain disulfide couples C251 to C311. LRR repeat units lie at residues 503–529 (LQRI…ALEA), 574–600 (TSNL…LFSS), and 611–632 (VYKL…GNSS). Residues 563–728 (PERQLSFKCN…AVLMDLNRTG (166 aa)) form the GAIN-B domain. Positions 679 to 728 (PAFWNFSLQGGQGGWQSDGCRILHQDDNFTTVSCHSLNSYAVLMDLNRTG) are GPS. C698 and C712 form a disulfide bridge. The helical transmembrane segment at 740-760 (VIYSTALVLVLCLLSVIVSYI) threads the bilayer. At 761 to 773 (YHHKSVRISKKCW) the chain is on the cytoplasmic side. The helical transmembrane segment at 774–794 (HMLVNLCLHILLTCAVFVGGI) threads the bilayer. Over 795-804 (NQTYNASVCQ) the chain is Extracellular. A helical transmembrane segment spans residues 805–825 (AMGIVLHYSTLATALWSGVTA). Residues 826–854 (RNIYKQVTRKAKRYEELDEPPPPPRPMLR) lie on the Cytoplasmic side of the membrane. A helical membrane pass occupies residues 855 to 875 (FYLIGGGIPIIVCGITAAANI). The Extracellular segment spans residues 876 to 897 (KNYGSQVNAPYCWMAWEPSLGA). A helical transmembrane segment spans residues 898 to 918 (FYGPAAFIVFVDCMYFLSILI). The Cytoplasmic portion of the chain corresponds to 919-977 (QLRRHPERRFELKEQSEEQQHLSVTEATEITPVHLESSPTAQPVPMSALENEHTFVSQL). Residues 978–998 (MGVAGSLTLYAALWVFGALAI) traverse the membrane as a helical segment. The Extracellular portion of the chain corresponds to 999–1005 (SQEHPAD). A helical membrane pass occupies residues 1006-1026 (LVFACLFGALALGLGAFLVAH). Residues 1027–1346 (HCVNRQDMRR…TGLWKHETTV (320 aa)) lie on the Cytoplasmic side of the membrane. The span at 1157–1169 (SVNNNNLPGNANI) shows a compositional bias: polar residues. Disordered stretches follow at residues 1157 to 1188 (SVNN…RASR) and 1202 to 1284 (SVEG…DGSE). Basic residues-rich tracts occupy residues 1173–1187 (PGRH…HRAS) and 1212–1226 (NKRH…RNSR). The segment covering 1238–1252 (QSQLQQDSSDAASTS) has biased composition (low complexity). Residues 1266–1280 (IGNGFGHGISNGGLL) show a composition bias toward gly residues. Positions 1344 to 1346 (TTV) match the PDZ-binding motif.

The protein belongs to the G-protein coupled receptor 2 family. Adhesion G-protein coupled receptor (ADGR) subfamily. As to quaternary structure, interacts (via PDZ-binding motif) with disheveled proteins; leading to the localization of dishevelled proteins to specific membrane subdomains. As to expression, ubiquitously expressed at very low levels.

It is found in the cell membrane. In terms of biological role, orphan receptor that acts as a critical modulator of planar cell polarity during gastrulation. Controls the localization of dishevelled. The chain is Adhesion G protein-coupled receptor A3 (adgra3) from Danio rerio (Zebrafish).